The sequence spans 195 residues: Imidazoleglycerol-phosphate dehydratase (195 aa).

This sequence belongs to the imidazoleglycerol-phosphate dehydratase family.

The protein localises to the cytoplasm. The catalysed reaction is D-erythro-1-(imidazol-4-yl)glycerol 3-phosphate = 3-(imidazol-4-yl)-2-oxopropyl phosphate + H2O. It functions in the pathway amino-acid biosynthesis; L-histidine biosynthesis; L-histidine from 5-phospho-alpha-D-ribose 1-diphosphate: step 6/9. This Polynucleobacter asymbioticus (strain DSM 18221 / CIP 109841 / QLW-P1DMWA-1) (Polynucleobacter necessarius subsp. asymbioticus) protein is Imidazoleglycerol-phosphate dehydratase.